Here is a 145-residue protein sequence, read N- to C-terminus: Selenoprotein M (145 aa).

The signal sequence occupies residues 1–23 (MSILLSPPSLLLLLAALVAPATS). Catalysis depends on nucleophile residues C45 and U48. Positions 45–48 (CGGU) form a cross-link, cysteinyl-selenocysteine (Cys-Sec). A non-standard amino acid (selenocysteine) is located at residue U48. Residues 125 to 145 (PPEYLWAPAKPPEEASEHDDL) form a disordered region.

Belongs to the selenoprotein M/F family. As to expression, widely expressed. Highly expressed in brain.

The protein resides in the cytoplasm. It is found in the perinuclear region. It localises to the endoplasmic reticulum. The protein localises to the golgi apparatus. In terms of biological role, may function as a thiol-disulfide oxidoreductase that participates in disulfide bond formation. The chain is Selenoprotein M from Mus musculus (Mouse).